The primary structure comprises 314 residues: N-alpha-acetyltransferase 80 (314 aa).

Residues 90-243 form the N-acetyltransferase domain; that stretch reads LEPVHCRPEL…TTVLRAFSKP (154 aa). Residues arginine 113 and 118–121 each bind substrate; that span reads RLHS. Residues 169 to 171, 177 to 182, and glutamine 207 each bind acetyl-CoA; these read VVV and GRGFGR. A disordered region spans residues 260-295; it reads VPRSSKGPPLPPPPPLPQSLTASPPPSPEPLPQSPL. The segment covering 267-292 has biased composition (pro residues); it reads PPLPPPPPLPQSLTASPPPSPEPLPQ.

It belongs to the acetyltransferase family.

The protein localises to the cytoplasm. It is found in the cytosol. It carries out the reaction N-terminal L-aspartyl-L-aspartyl-L-aspartyl-[protein] + acetyl-CoA = N-terminal N-acetyl-L-aspartyl-L-aspartyl-L-aspartyl-[protein] + CoA + H(+). It catalyses the reaction N-terminal L-glutamyl-L-glutamyl-L-glutamyl-[protein] + acetyl-CoA = N-terminal N-acetyl-L-glutamyl-L-glutamyl-L-glutamyl-[protein] + CoA + H(+). In terms of biological role, N-alpha-acetyltransferase that specifically mediates the acetylation of the acidic amino terminus of processed forms of beta- and gamma-actin (ACTB and ACTG, respectively). N-terminal acetylation of processed beta- and gamma-actin regulates actin filament depolymerization and elongation. In vivo, preferentially displays N-terminal acetyltransferase activity towards acid N-terminal sequences starting with Asp-Asp-Asp and Glu-Glu-Glu. In vitro, shows high activity towards Met-Asp-Glu-Leu and Met-Asp-Asp-Asp. May act as a tumor suppressor. The chain is N-alpha-acetyltransferase 80 from Mus musculus (Mouse).